Here is a 234-residue protein sequence, read N- to C-terminus: Glutathione S-transferase 1 (234 aa).

The 88-residue stretch at 3–90 (LPIIKVHWLD…YVLQHFDHSH (88 aa)) folds into the GST N-terminal domain. The GST C-terminal domain occupies 96–234 (DADIADQINY…EKARALGSNF (139 aa)).

It belongs to the GST superfamily. Homodimer.

The protein localises to the endoplasmic reticulum membrane. It catalyses the reaction RX + glutathione = an S-substituted glutathione + a halide anion + H(+). In Saccharomyces cerevisiae (strain ATCC 204508 / S288c) (Baker's yeast), this protein is Glutathione S-transferase 1 (GTT1).